A 166-amino-acid polypeptide reads, in one-letter code: Large ribosomal subunit protein uL10 (166 aa).

It belongs to the universal ribosomal protein uL10 family. Part of the ribosomal stalk of the 50S ribosomal subunit. The N-terminus interacts with L11 and the large rRNA to form the base of the stalk. The C-terminus forms an elongated spine to which L12 dimers bind in a sequential fashion forming a multimeric L10(L12)X complex.

Functionally, forms part of the ribosomal stalk, playing a central role in the interaction of the ribosome with GTP-bound translation factors. The chain is Large ribosomal subunit protein uL10 from Bacillus cereus (strain ATCC 14579 / DSM 31 / CCUG 7414 / JCM 2152 / NBRC 15305 / NCIMB 9373 / NCTC 2599 / NRRL B-3711).